The chain runs to 232 residues: Orotate phosphoribosyltransferase (232 aa).

5-phospho-alpha-D-ribose 1-diphosphate contacts are provided by residues arginine 107, lysine 108, lysine 111, and 133–141 (EDLTTDGGS). Threonine 137 is an orotate binding site.

Belongs to the purine/pyrimidine phosphoribosyltransferase family. PyrE subfamily. Homodimer. Mg(2+) is required as a cofactor.

The enzyme catalyses orotidine 5'-phosphate + diphosphate = orotate + 5-phospho-alpha-D-ribose 1-diphosphate. Its pathway is pyrimidine metabolism; UMP biosynthesis via de novo pathway; UMP from orotate: step 1/2. Functionally, catalyzes the transfer of a ribosyl phosphate group from 5-phosphoribose 1-diphosphate to orotate, leading to the formation of orotidine monophosphate (OMP). The polypeptide is Orotate phosphoribosyltransferase (Cereibacter sphaeroides (strain ATCC 17023 / DSM 158 / JCM 6121 / CCUG 31486 / LMG 2827 / NBRC 12203 / NCIMB 8253 / ATH 2.4.1.) (Rhodobacter sphaeroides)).